A 610-amino-acid chain; its full sequence is Zinc metalloproteinase-disintegrin-like halysase (610 aa).

An N-terminal signal peptide occupies residues 1–20; that stretch reads MIQVLLVTICLAVFPYQGSS. Residues 21 to 182 constitute a propeptide that is removed on maturation; the sequence is IILESGNVND…WESYEPIKKA (162 aa). Residues 199–395 enclose the Peptidase M12B domain; that stretch reads KYVKLVMVAD…DMPQCILKKP (197 aa). Residue Asn-218 is glycosylated (N-linked (GlcNAc...) asparagine). 3 disulfides stabilise this stretch: Cys-310/Cys-390, Cys-350/Cys-374, and Cys-352/Cys-357. Residue His-335 coordinates Zn(2+). Residue Glu-336 is part of the active site. Positions 339 and 345 each coordinate Zn(2+). Residues 403–488 enclose the Disintegrin domain; the sequence is PPVCGNYFVE…AECTDRFQRN (86 aa). Ca(2+) contacts are provided by Val-405, Asn-408, Phe-410, Glu-412, Glu-415, and Asp-418. 14 disulfides stabilise this stretch: Cys-406/Cys-435, Cys-417/Cys-430, Cys-419/Cys-425, Cys-429/Cys-452, Cys-443/Cys-449, Cys-448/Cys-474, Cys-461/Cys-481, Cys-468/Cys-499, Cys-492/Cys-504, Cys-511/Cys-561, Cys-526/Cys-572, Cys-539/Cys-549, Cys-556/Cys-598, and Cys-592/Cys-603. Positions 467 to 469 match the D/ECD-tripeptide motif; the sequence is ECD.

The protein belongs to the venom metalloproteinase (M12B) family. P-III subfamily. P-IIIa sub-subfamily. As to quaternary structure, monomer. It depends on Zn(2+) as a cofactor. In terms of tissue distribution, expressed by the venom gland.

It localises to the secreted. Its activity is regulated as follows. Inhibited by EDTA and EGTA. Not inhibited by PMSF, antipain, pepstatin, and iodoacetamide. Functionally, strongly inhibits the collagen-induced human platelet aggregation (inhibition of alpha-2/beta-1 (ITGA2/ITGB1) integrin). Hydrolyzes the Aalpha-chain of fibrinogen, without cleavage of Bbeta- and gamma-chains. Degrades type IV collagen (but not types I, II and V), fibronectin and vitronectin and also integrins alpha-1/beta-1 (ITGA1/ITGB1) and alpha-5/beta/1 (ITGA5/ITGB1) (but not alpha-V/beta-3 (ITGAV/ITGB3) and alpha-V/beta-5 (ITGAV/ITGB5) integrins). Both metalloproteinase (peptidase M12B) and disintegrin-like domains (recombinantly expressed and named halydin) play characteristic roles to inhibit human platelet aggregation. Induces apoptosis and strongly inhibits proliferation of endothelial cells as well as adhesion of the cells to extracellular matrix proteins. The apoptosis is closely associated with activation of caspase-3 and decreased level of Bcl-X(L)/Bax. Apohalysase, which lacks metalloprotease activity, is also able to induce the apoptosis. Cleaves insulin B chain at '34-His-|-Leu-35', '37-Glu-|-Ala-38', '38-Ala-|-Leu-39', '39-Leu-|-Tyr-40', '40-Tyr-|-Leu-41', '47-Gly-|-Phe-48' and '48-Phe-|-Phe-49' bonds. In Gloydius halys (Chinese water mocassin), this protein is Zinc metalloproteinase-disintegrin-like halysase.